The primary structure comprises 507 residues: Histidine ammonia-lyase (507 aa).

Residues 141 to 143 (ASG) constitute a cross-link (5-imidazolinone (Ala-Gly)). At serine 142 the chain carries 2,3-didehydroalanine (Ser).

This sequence belongs to the PAL/histidase family. Contains an active site 4-methylidene-imidazol-5-one (MIO), which is formed autocatalytically by cyclization and dehydration of residues Ala-Ser-Gly.

Its subcellular location is the cytoplasm. It catalyses the reaction L-histidine = trans-urocanate + NH4(+). It participates in amino-acid degradation; L-histidine degradation into L-glutamate; N-formimidoyl-L-glutamate from L-histidine: step 1/3. This chain is Histidine ammonia-lyase, found in Burkholderia pseudomallei (strain 668).